The primary structure comprises 224 residues: Thiamine-phosphate synthase (224 aa).

4-amino-2-methyl-5-(diphosphooxymethyl)pyrimidine-binding positions include 44-48 (QFREK) and N79. Mg(2+)-binding residues include D80 and D99. Position 117 (S117) interacts with 4-amino-2-methyl-5-(diphosphooxymethyl)pyrimidine. Residue 143-145 (TET) participates in 2-[(2R,5Z)-2-carboxy-4-methylthiazol-5(2H)-ylidene]ethyl phosphate binding. A 4-amino-2-methyl-5-(diphosphooxymethyl)pyrimidine-binding site is contributed by K146. 2-[(2R,5Z)-2-carboxy-4-methylthiazol-5(2H)-ylidene]ethyl phosphate contacts are provided by residues G175 and 195–196 (IS).

This sequence belongs to the thiamine-phosphate synthase family. Requires Mg(2+) as cofactor.

The enzyme catalyses 2-[(2R,5Z)-2-carboxy-4-methylthiazol-5(2H)-ylidene]ethyl phosphate + 4-amino-2-methyl-5-(diphosphooxymethyl)pyrimidine + 2 H(+) = thiamine phosphate + CO2 + diphosphate. It catalyses the reaction 2-(2-carboxy-4-methylthiazol-5-yl)ethyl phosphate + 4-amino-2-methyl-5-(diphosphooxymethyl)pyrimidine + 2 H(+) = thiamine phosphate + CO2 + diphosphate. It carries out the reaction 4-methyl-5-(2-phosphooxyethyl)-thiazole + 4-amino-2-methyl-5-(diphosphooxymethyl)pyrimidine + H(+) = thiamine phosphate + diphosphate. Its pathway is cofactor biosynthesis; thiamine diphosphate biosynthesis; thiamine phosphate from 4-amino-2-methyl-5-diphosphomethylpyrimidine and 4-methyl-5-(2-phosphoethyl)-thiazole: step 1/1. In terms of biological role, condenses 4-methyl-5-(beta-hydroxyethyl)thiazole monophosphate (THZ-P) and 2-methyl-4-amino-5-hydroxymethyl pyrimidine pyrophosphate (HMP-PP) to form thiamine monophosphate (TMP). The polypeptide is Thiamine-phosphate synthase (Bacillus licheniformis (strain ATCC 14580 / DSM 13 / JCM 2505 / CCUG 7422 / NBRC 12200 / NCIMB 9375 / NCTC 10341 / NRRL NRS-1264 / Gibson 46)).